The sequence spans 369 residues: MSKTISLLKFIICILISLCSFTYAEKIRDLTSIEGIRDNQLIGYGLIVGLDGTGDQSTQTPFTNQSLHNMLSQLGVTIPPDTNMHLKNVAAVIVTANLPPFSHTGEAIDVVVSSMGDAKSLKGGTLLMTPLRGADNQIYAIAQGNILVSEKNNLKKNNSIFSNQVNSGRINHGATIEREINTDFGKKKIINLQLNKEDFGIAQKISDMINVQYPDTATALNSKTVQLNTYANNTIQVHMLSNIQNIDISMPSQEAKVIINPRTGSIVINQEVKLGTCIVSHGDLSILIEKKEEEKINSFLFETLRKNQKESFLKNIINRNYINNNSVKNTSLNNIVRVLNSLGTKPNELISILQLMKNAGCLHAKLEIV.

Residues Met-1–Ala-24 form the signal peptide.

Belongs to the FlgI family. As to quaternary structure, the basal body constitutes a major portion of the flagellar organelle and consists of four rings (L,P,S, and M) mounted on a central rod.

It is found in the bacterial flagellum basal body. In terms of biological role, assembles around the rod to form the L-ring and probably protects the motor/basal body from shearing forces during rotation. The protein is Flagellar P-ring protein of Buchnera aphidicola subsp. Schizaphis graminum (strain Sg).